A 354-amino-acid chain; its full sequence is Probable protein phosphatase 2C 69 (354 aa).

Residues 33–279 (SYGYASSAGK…DNITCVVVRF (247 aa)) enclose the PPM-type phosphatase domain. Residues D69, G70, D231, and D270 each contribute to the Mn(2+) site. The tract at residues 289 to 354 (HISSSSSKEA…LERNSVTDKV (66 aa)) is disordered. Polar residues-rich tracts occupy residues 309–328 (ISSN…PENV) and 336–348 (ASRS…LERN).

It belongs to the PP2C family. Mg(2+) is required as a cofactor. Mn(2+) serves as cofactor.

It carries out the reaction O-phospho-L-seryl-[protein] + H2O = L-seryl-[protein] + phosphate. It catalyses the reaction O-phospho-L-threonyl-[protein] + H2O = L-threonyl-[protein] + phosphate. In Arabidopsis thaliana (Mouse-ear cress), this protein is Probable protein phosphatase 2C 69.